The chain runs to 349 residues: KH domain-containing, RNA-binding, signal transduction-associated protein 2 (349 aa).

Positions 65–135 (LIPVKQYPKF…HLSDELHVLI (71 aa)) constitute a KH domain. Disordered regions lie at residues 182 to 284 (EDSG…DDQT) and 319 to 349 (PEEW…YGRY). R230 and R240 each carry omega-N-methylarginine. Positions 340–349 (GYREHPYGRY) are enriched in basic and acidic residues.

The protein belongs to the KHDRBS family. Self-associates to form homooligomers. Interacts with KHDRBS1/SAM68; heterooligomer formation of KHDRBS family proteins may modulate RNA substrate specificity. Interacts with RBMX. Interacts with SAFB, SFRS9 and YTHDC1. Interacts with FYN and PLCG1 (via SH3 domain). Interacts (phosphorylated) with FYN, GRB2, PLCG1 and RASA1 (via SH2 domain). In terms of processing, methylated. Post-translationally, tyrosine phosphorylated by FYN, PTK6 and SRC. Tyrosine phosphorylated by SRC during mitosis. In terms of tissue distribution, highly expressed in brain, lung, kidney and small intestine. Weakly expressed in placenta, liver, spleen, thymus, ovary and colon.

The protein resides in the nucleus. RNA-binding protein that plays a role in the regulation of alternative splicing and influences mRNA splice site selection and exon inclusion. Binds both poly(A) and poly(U) homopolymers. Phosphorylation by PTK6 inhibits its RNA-binding ability. Induces an increased concentration-dependent incorporation of exon in CD44 pre-mRNA by direct binding to purine-rich exonic enhancer. Can regulate alternative splicing of NRXN1 in the laminin G-like domain 6 containing the evolutionary conserved neurexin alternative spliced segment 4 (AS4) involved in neurexin selective targeting to postsynaptic partners. Regulates cell-type specific alternative splicing of NRXN1 at AS4 and acts synergystically with SAM68 in exon skipping. In contrast acts antagonistically with SAM68 in NRXN3 exon skipping at AS4. Its phosphorylation by FYN inhibits its ability to regulate splice site selection. May function as an adapter protein for Src kinases during mitosis. The chain is KH domain-containing, RNA-binding, signal transduction-associated protein 2 (KHDRBS2) from Homo sapiens (Human).